The following is a 421-amino-acid chain: 3-isopropylmalate dehydratase large subunit (421 aa).

[4Fe-4S] cluster is bound by residues cysteine 301, cysteine 361, and cysteine 364.

The protein belongs to the aconitase/IPM isomerase family. LeuC type 2 subfamily. Heterodimer of LeuC and LeuD. [4Fe-4S] cluster is required as a cofactor.

The catalysed reaction is (2R,3S)-3-isopropylmalate = (2S)-2-isopropylmalate. The protein operates within amino-acid biosynthesis; L-leucine biosynthesis; L-leucine from 3-methyl-2-oxobutanoate: step 2/4. Its function is as follows. Catalyzes the isomerization between 2-isopropylmalate and 3-isopropylmalate, via the formation of 2-isopropylmaleate. In Desulfitobacterium hafniense (strain Y51), this protein is 3-isopropylmalate dehydratase large subunit.